We begin with the raw amino-acid sequence, 214 residues long: tRNA (guanine-N(7)-)-methyltransferase (214 aa).

Residues Glu43, Glu68, Asp95, and Asp117 each contribute to the S-adenosyl-L-methionine site. Asp117 is an active-site residue. Residues Lys121, Asp153, and 191–194 each bind substrate; that span reads TEYE.

The protein belongs to the class I-like SAM-binding methyltransferase superfamily. TrmB family.

The catalysed reaction is guanosine(46) in tRNA + S-adenosyl-L-methionine = N(7)-methylguanosine(46) in tRNA + S-adenosyl-L-homocysteine. It functions in the pathway tRNA modification; N(7)-methylguanine-tRNA biosynthesis. Catalyzes the formation of N(7)-methylguanine at position 46 (m7G46) in tRNA. In Lachnoclostridium phytofermentans (strain ATCC 700394 / DSM 18823 / ISDg) (Clostridium phytofermentans), this protein is tRNA (guanine-N(7)-)-methyltransferase.